We begin with the raw amino-acid sequence, 201 residues long: 3-isopropylmalate dehydratase small subunit (201 aa).

It belongs to the LeuD family. LeuD type 1 subfamily. As to quaternary structure, heterodimer of LeuC and LeuD.

It catalyses the reaction (2R,3S)-3-isopropylmalate = (2S)-2-isopropylmalate. It participates in amino-acid biosynthesis; L-leucine biosynthesis; L-leucine from 3-methyl-2-oxobutanoate: step 2/4. Functionally, catalyzes the isomerization between 2-isopropylmalate and 3-isopropylmalate, via the formation of 2-isopropylmaleate. The polypeptide is 3-isopropylmalate dehydratase small subunit (Brucella abortus (strain S19)).